Consider the following 419-residue polypeptide: UDP-N-acetylglucosamine 1-carboxyvinyltransferase 2 (419 aa).

24 to 25 contacts phosphoenolpyruvate; that stretch reads KN. Arg94 lines the UDP-N-acetyl-alpha-D-glucosamine pocket. The Proton donor role is filled by Cys118. A 2-(S-cysteinyl)pyruvic acid O-phosphothioketal modification is found at Cys118. UDP-N-acetyl-alpha-D-glucosamine contacts are provided by residues 123–127, Asp307, and Ile329; that span reads RPIDQ.

Belongs to the EPSP synthase family. MurA subfamily.

It is found in the cytoplasm. It carries out the reaction phosphoenolpyruvate + UDP-N-acetyl-alpha-D-glucosamine = UDP-N-acetyl-3-O-(1-carboxyvinyl)-alpha-D-glucosamine + phosphate. The protein operates within cell wall biogenesis; peptidoglycan biosynthesis. In terms of biological role, cell wall formation. Adds enolpyruvyl to UDP-N-acetylglucosamine. This is UDP-N-acetylglucosamine 1-carboxyvinyltransferase 2 from Staphylococcus aureus (strain MSSA476).